A 255-amino-acid chain; its full sequence is Ribosomal RNA small subunit methyltransferase A (255 aa).

Asn-12, Leu-14, Gly-39, Glu-60, Asp-84, and Asn-106 together coordinate S-adenosyl-L-methionine.

Belongs to the class I-like SAM-binding methyltransferase superfamily. rRNA adenine N(6)-methyltransferase family. RsmA subfamily.

It localises to the cytoplasm. It catalyses the reaction adenosine(1518)/adenosine(1519) in 16S rRNA + 4 S-adenosyl-L-methionine = N(6)-dimethyladenosine(1518)/N(6)-dimethyladenosine(1519) in 16S rRNA + 4 S-adenosyl-L-homocysteine + 4 H(+). Functionally, specifically dimethylates two adjacent adenosines (A1518 and A1519) in the loop of a conserved hairpin near the 3'-end of 16S rRNA in the 30S particle. May play a critical role in biogenesis of 30S subunits. The sequence is that of Ribosomal RNA small subunit methyltransferase A from Herminiimonas arsenicoxydans.